The chain runs to 1005 residues: Translation initiation factor IF-2 (1005 aa).

Disordered stretches follow at residues 54 to 337 (KYVP…RRPQ) and 368 to 414 (PKPK…PTSV). Over residues 58-73 (SPSTHSMPPTRPTSHS) the composition is skewed to polar residues. Positions 75–86 (PLPPQPGKPQPK) are enriched in pro residues. Over residues 146 to 157 (GSNSPSHSESTP) the composition is skewed to polar residues. 2 stretches are compositionally biased toward low complexity: residues 189–198 (PSPAAMAGRA) and 222–240 (VESA…PRAE). The span at 258 to 274 (PRSETSEDGARRGEKLV) shows a compositional bias: basic and acidic residues. Positions 392–401 (GGRKLSRRDR) are enriched in basic residues. In terms of domain architecture, tr-type G spans 495-668 (RRPPVVTIMG…LLVSEVEDLY (174 aa)). Residues 504 to 511 (GHVDHGKT) are G1. 504 to 511 (GHVDHGKT) is a GTP binding site. Residues 529-533 (GITQH) form a G2 region. The tract at residues 554–557 (DTPG) is G3. GTP is bound by residues 554–558 (DTPGH) and 608–611 (NKID). Residues 608–611 (NKID) form a G4 region. The segment at 644-646 (SAI) is G5.

Belongs to the TRAFAC class translation factor GTPase superfamily. Classic translation factor GTPase family. IF-2 subfamily.

The protein resides in the cytoplasm. Functionally, one of the essential components for the initiation of protein synthesis. Protects formylmethionyl-tRNA from spontaneous hydrolysis and promotes its binding to the 30S ribosomal subunits. Also involved in the hydrolysis of GTP during the formation of the 70S ribosomal complex. This is Translation initiation factor IF-2 from Cyanothece sp. (strain PCC 7425 / ATCC 29141).